Reading from the N-terminus, the 31-residue chain is Photosystem II reaction center protein T (31 aa).

Residues 3-23 (ALVYTFLLIGTLGIIFFAIFF) traverse the membrane as a helical segment.

It belongs to the PsbT family. In terms of assembly, PSII is composed of 1 copy each of membrane proteins PsbA, PsbB, PsbC, PsbD, PsbE, PsbF, PsbH, PsbI, PsbJ, PsbK, PsbL, PsbM, PsbT, PsbY, PsbZ, Psb30/Ycf12, at least 3 peripheral proteins of the oxygen-evolving complex and a large number of cofactors. It forms dimeric complexes.

The protein resides in the plastid. Its subcellular location is the chloroplast thylakoid membrane. Its function is as follows. Found at the monomer-monomer interface of the photosystem II (PS II) dimer, plays a role in assembly and dimerization of PSII. PSII is a light-driven water plastoquinone oxidoreductase, using light energy to abstract electrons from H(2)O, generating a proton gradient subsequently used for ATP formation. This chain is Photosystem II reaction center protein T, found in Tetradesmus obliquus (Green alga).